The following is a 239-amino-acid chain: Sugar fermentation stimulation protein homolog (239 aa).

The protein belongs to the SfsA family.

The protein is Sugar fermentation stimulation protein homolog of Cyanothece sp. (strain PCC 7425 / ATCC 29141).